The chain runs to 586 residues: Monoterpene synthase TPS4, chloroplastic (586 aa).

The transit peptide at 1 to 47 (MAATRNLSLLAQSSQPWAGIYGSHGSPRPISSWLRRQSIAKTSYICM) directs the protein to the chloroplast. Positions 340, 344, 485, 489, and 493 each coordinate Mg(2+). The short motif at 340 to 344 (DDIFD) is the DDXXD motif element.

It belongs to the terpene synthase family. Tpsg subfamily. Monomer. It depends on Mg(2+) as a cofactor.

It is found in the plastid. The protein localises to the chloroplast. It catalyses the reaction (2E)-geranyl diphosphate + H2O = (2E)-geraniol + diphosphate. The protein operates within secondary metabolite biosynthesis; terpenoid biosynthesis. Functionally, monoterpene synthase involved in the biosynthesis of volatile organic compounds. Mediates the conversion of (2E)-geranyl diphosphate (GPP) into the acyclic monoterpene, geraniol. Does not use (2E,6E)-farnesyl diphosphate (FPP) as substrate. This Cananga odorata (Ylang-ylang tree) protein is Monoterpene synthase TPS4, chloroplastic.